A 351-amino-acid chain; its full sequence is Rhodopsin (351 aa).

Over 1–36 (MNGTEGPFFYIPMVNTTGIVRSPYEYPQYYLVNPAA) the chain is Extracellular. N-linked (GlcNAc...) asparagine glycosylation is found at asparagine 2 and asparagine 15. Residues 37 to 61 (YAILGAYMFFLIIVGFPVNFMTLYV) traverse the membrane as a helical segment. Over 62 to 73 (TLEHKKLRTPLN) the chain is Cytoplasmic. A helical transmembrane segment spans residues 74–96 (YILLNLAVADLFMVIGGFTTTMY). Residues 97–110 (TSMHGYFVLGRLGC) are Extracellular-facing. A disulfide bridge links cysteine 110 with cysteine 187. The helical transmembrane segment at 111-133 (NLEGFFATLGGMISLWSLAVLAI) threads the bilayer. The short motif at 134 to 136 (ERW) is the 'Ionic lock' involved in activated form stabilization element. Residues 134–152 (ERWVVVCKPISNFRFGENH) are Cytoplasmic-facing. Residues 153-173 (AIMGVSLTWGMALACTVPPLV) form a helical membrane-spanning segment. The Extracellular segment spans residues 174–202 (GWSRYIPEGMQCSCGIDYYTRAEGFNNES). Asparagine 200 is a glycosylation site (N-linked (GlcNAc...) asparagine). A helical transmembrane segment spans residues 203–224 (FVLYMFFCHFTIPLTIIFFCYG). Over 225-252 (RLLCAVKEAAAAQQESETTQRAEREVTR) the chain is Cytoplasmic. A helical transmembrane segment spans residues 253 to 274 (MVIIMVIGFLVCWLPYASVAWF). The Extracellular portion of the chain corresponds to 275-286 (IFTHQGSEFGPL). A helical membrane pass occupies residues 287–308 (FMTIPAFFAKSSSIYNPMIYIC). Position 296 is an N6-(retinylidene)lysine (lysine 296). Residues 309–351 (MNKQFRHCMITTLFCGKNPFEGEEEGASSTKTEASSASSVSPA) are Cytoplasmic-facing. Cysteine 323 carries the S-palmitoyl cysteine lipid modification. The disordered stretch occupies residues 330 to 351 (GEEEGASSTKTEASSASSVSPA). The segment covering 335-351 (ASSTKTEASSASSVSPA) has biased composition (low complexity).

Belongs to the G-protein coupled receptor 1 family. Opsin subfamily. Post-translationally, phosphorylated on some or all of the serine and threonine residues present in the C-terminal region. Contains one covalently linked retinal chromophore.

It localises to the membrane. The protein resides in the cell projection. It is found in the cilium. Its subcellular location is the photoreceptor outer segment. Functionally, photoreceptor required for image-forming vision at low light intensity. While most salt water fish species use retinal as chromophore, most freshwater fish use 3-dehydroretinal, or a mixture of retinal and 3-dehydroretinal. Light-induced isomerization of 11-cis to all-trans retinal triggers a conformational change that activates signaling via G-proteins. Subsequent receptor phosphorylation mediates displacement of the bound G-protein alpha subunit by arrestin and terminates signaling. In Sargocentron diadema (Crown squirrelfish), this protein is Rhodopsin (rho).